A 136-amino-acid polypeptide reads, in one-letter code: Small ribosomal subunit protein bS6 (136 aa).

Positions Gln99–Glu136 are disordered. Over residues Leu103–Glu136 the composition is skewed to basic and acidic residues.

This sequence belongs to the bacterial ribosomal protein bS6 family.

Functionally, binds together with bS18 to 16S ribosomal RNA. In Azotobacter vinelandii (strain DJ / ATCC BAA-1303), this protein is Small ribosomal subunit protein bS6.